Reading from the N-terminus, the 244-residue chain is SURF1-like protein (244 aa).

2 helical membrane passes run 7 to 23 (ILTT…WQLS) and 201 to 219 (YAIT…YVIY).

This sequence belongs to the SURF1 family.

Its subcellular location is the cell membrane. The polypeptide is SURF1-like protein (Rickettsia prowazekii (strain Madrid E)).